The sequence spans 229 residues: Galactonate operon transcriptional repressor (229 aa).

The HTH gntR-type domain maps to 1–71 (MTLNKTDRIV…RYRGAFVAPR (71 aa)). Residues 31–50 (EAELCEEFATSRNIIREVFR) constitute a DNA-binding region (H-T-H motif). Zn(2+)-binding residues include D146, H150, and H195.

In terms of assembly, homodimer.

With respect to regulation, D-galactonate binds DgoR and induces a conformational change in the protein, which decreases its affinity for DNA and consequently derepresses transcription of the dgoRKADT operon. Its function is as follows. Involved in the regulation of D-galactonate metabolism. Represses the expression of the dgoRKADT operon by binding to two closely spaced inverted repeats in the cis-acting element, which overlap with the D-galactonate responsive dgo promoter. Employs a derepression mechanism using D-galactonate as a specific effector molecule. The chain is Galactonate operon transcriptional repressor from Escherichia coli (strain K12).